Here is a 505-residue protein sequence, read N- to C-terminus: DNA repair protein RadA (505 aa).

A C4-type zinc finger spans residues 10 to 27 (CSACGADHAQWFGRCPKC). ATP is bound at residue 107 to 114 (GDPGIGKS). A RadA KNRFG motif motif is present at residues 281 to 285 (KNRFG). Residues 380-505 (DAYLSVAGGL…KIEEDLGKKD (126 aa)) are lon-protease-like. The interval 485–505 (NTTDQGNGSEAKIEEDLGKKD) is disordered. The span at 495–505 (AKIEEDLGKKD) shows a compositional bias: basic and acidic residues.

It belongs to the RecA family. RadA subfamily.

Functionally, DNA-dependent ATPase involved in processing of recombination intermediates, plays a role in repairing DNA breaks. Stimulates the branch migration of RecA-mediated strand transfer reactions, allowing the 3' invading strand to extend heteroduplex DNA faster. Binds ssDNA in the presence of ADP but not other nucleotides, has ATPase activity that is stimulated by ssDNA and various branched DNA structures, but inhibited by SSB. Does not have RecA's homology-searching function. This is DNA repair protein RadA from Synechocystis sp. (strain ATCC 27184 / PCC 6803 / Kazusa).